The sequence spans 853 residues: DNA mismatch repair protein MutS (853 aa).

Position 616–623 (616–623 (GPNMGGKS)) interacts with ATP.

The protein belongs to the DNA mismatch repair MutS family.

In terms of biological role, this protein is involved in the repair of mismatches in DNA. It is possible that it carries out the mismatch recognition step. This protein has a weak ATPase activity. This is DNA mismatch repair protein MutS from Erwinia tasmaniensis (strain DSM 17950 / CFBP 7177 / CIP 109463 / NCPPB 4357 / Et1/99).